A 1223-amino-acid polypeptide reads, in one-letter code: DNA-directed RNA polymerase II subunit RPB2 (1223 aa).

The disordered stretch occupies residues 1 to 20; it reads MSADNEDYYDEDPYGFEEEN. Residue aspartate 836 coordinates Mg(2+). Positions 1162, 1165, 1181, and 1184 each coordinate Zn(2+). A C4-type zinc finger spans residues 1162-1184; that stretch reads CGICGLMSVIAKLNHNQFECKGC.

It belongs to the RNA polymerase beta chain family. As to quaternary structure, component of the RNA polymerase II (Pol II) complex consisting of 12 subunits.

Its subcellular location is the nucleus. The catalysed reaction is RNA(n) + a ribonucleoside 5'-triphosphate = RNA(n+1) + diphosphate. Its function is as follows. DNA-dependent RNA polymerase catalyzes the transcription of DNA into RNA using the four ribonucleoside triphosphates as substrates. Second largest component of RNA polymerase II which synthesizes mRNA precursors and many functional non-coding RNAs. Proposed to contribute to the polymerase catalytic activity and forms the polymerase active center together with the largest subunit. Pol II is the central component of the basal RNA polymerase II transcription machinery. It is composed of mobile elements that move relative to each other. RPB2 is part of the core element with the central large cleft, the clamp element that moves to open and close the cleft and the jaws that are thought to grab the incoming DNA template. The sequence is that of DNA-directed RNA polymerase II subunit RPB2 (RPB2) from Candida glabrata (strain ATCC 2001 / BCRC 20586 / JCM 3761 / NBRC 0622 / NRRL Y-65 / CBS 138) (Yeast).